A 461-amino-acid polypeptide reads, in one-letter code: uncharacterized protein (461 aa).

3 LRR repeats span residues 119-140 (NVKK…EKMS), 141-162 (LLEV…QHCK), and 163-184 (NLKE…EYLK). In terms of domain architecture, LRRCT spans 197-237 (NPCVGEGGQEYRRKVIRVLPNLTKLDDKPVTTTDHQEAIED).

This is an uncharacterized protein from Caenorhabditis elegans.